The chain runs to 198 residues: Recombination protein RecR (198 aa).

Residues 57–72 (CDKCNTFTEAQICEVC) form a C4-type zinc finger. Positions 80–175 (TLLCVVETPA…AVTRLARGVP (96 aa)) constitute a Toprim domain.

Belongs to the RecR family.

Functionally, may play a role in DNA repair. It seems to be involved in an RecBC-independent recombinational process of DNA repair. It may act with RecF and RecO. This Burkholderia multivorans (strain ATCC 17616 / 249) protein is Recombination protein RecR.